Reading from the N-terminus, the 169-residue chain is Ribosome maturation factor RimM (169 aa).

The region spanning 97 to 169 (PGEYYWYQLI…VITVDWDMNF (73 aa)) is the PRC barrel domain.

It belongs to the RimM family. In terms of assembly, binds ribosomal protein uS19.

It is found in the cytoplasm. Functionally, an accessory protein needed during the final step in the assembly of 30S ribosomal subunit, possibly for assembly of the head region. Essential for efficient processing of 16S rRNA. May be needed both before and after RbfA during the maturation of 16S rRNA. It has affinity for free ribosomal 30S subunits but not for 70S ribosomes. The polypeptide is Ribosome maturation factor RimM (Legionella pneumophila (strain Paris)).